We begin with the raw amino-acid sequence, 464 residues long: Glutamate--tRNA ligase (464 aa).

The 'HIGH' region signature appears at P9–G19. Residues K242–R246 carry the 'KMSKS' region motif. K245 contributes to the ATP binding site.

The protein belongs to the class-I aminoacyl-tRNA synthetase family. Glutamate--tRNA ligase type 1 subfamily. As to quaternary structure, monomer.

It is found in the cytoplasm. The enzyme catalyses tRNA(Glu) + L-glutamate + ATP = L-glutamyl-tRNA(Glu) + AMP + diphosphate. Catalyzes the attachment of glutamate to tRNA(Glu) in a two-step reaction: glutamate is first activated by ATP to form Glu-AMP and then transferred to the acceptor end of tRNA(Glu). In Neisseria meningitidis serogroup B (strain ATCC BAA-335 / MC58), this protein is Glutamate--tRNA ligase.